A 239-amino-acid chain; its full sequence is Ribonuclease P protein component 3 (239 aa).

It belongs to the eukaryotic/archaeal RNase P protein component 3 family. Consists of a catalytic RNA component and at least 4-5 protein subunits.

It localises to the cytoplasm. The catalysed reaction is Endonucleolytic cleavage of RNA, removing 5'-extranucleotides from tRNA precursor.. Functionally, part of ribonuclease P, a protein complex that generates mature tRNA molecules by cleaving their 5'-ends. This Methanosarcina mazei (strain ATCC BAA-159 / DSM 3647 / Goe1 / Go1 / JCM 11833 / OCM 88) (Methanosarcina frisia) protein is Ribonuclease P protein component 3.